A 919-amino-acid chain; its full sequence is DNA double-strand break repair Rad50 ATPase (919 aa).

ATP is bound by residues 33 to 39 (NGAGKST) and Gln143. Coiled-coil stretches lie at residues 208–268 (MTLR…MLVN), 315–379 (HEVA…RRYT), and 414–458 (ESVL…LEES). A Zinc-hook domain is found at 417 to 516 (LERLDAVIND…EASRLQDKRR (100 aa)). Zn(2+) contacts are provided by Cys464 and Cys467. 3 coiled-coil regions span residues 486 to 515 (EAER…QDKR), 541 to 595 (EDLA…LQRL), and 635 to 749 (AYRS…RKAS).

This sequence belongs to the SMC family. RAD50 subfamily. As to quaternary structure, homodimer. Forms a heterotetramer composed of two Mre11 subunits and two Rad50 subunits. It depends on Zn(2+) as a cofactor.

Part of the Rad50/Mre11 complex, which is involved in the early steps of DNA double-strand break (DSB) repair. The complex may facilitate opening of the processed DNA ends to aid in the recruitment of HerA and NurA. Rad50 controls the balance between DNA end bridging and DNA resection via ATP-dependent structural rearrangements of the Rad50/Mre11 complex. The sequence is that of DNA double-strand break repair Rad50 ATPase from Aeropyrum pernix (strain ATCC 700893 / DSM 11879 / JCM 9820 / NBRC 100138 / K1).